Reading from the N-terminus, the 293-residue chain is Extracellular metalloprotease MGYG_00389 (293 aa).

Residues 1-19 (MRFSVFLPAIAALSSAVAA) form the signal peptide. Residues Asn-49 and Asn-53 are each glycosylated (N-linked (GlcNAc...) asparagine). His-184 serves as a coordination point for Zn(2+). Glu-185 is a catalytic residue. His-188 lines the Zn(2+) pocket. Cysteines 223 and 249 form a disulfide. Residues 270-293 (GSGSGSVTRPRPKPPVLMDYEHRL) form a disordered region.

Belongs to the peptidase M43B family.

The protein localises to the secreted. In terms of biological role, secreted metalloproteinase that allows assimilation of proteinaceous substrates. Plays a pivotal role as a pathogenicity determinant during infections and contributes to the ability of the pathogen to persist within the mammalian host. The protein is Extracellular metalloprotease MGYG_00389 of Arthroderma gypseum (strain ATCC MYA-4604 / CBS 118893) (Microsporum gypseum).